The chain runs to 416 residues: ATP-dependent Clp protease ATP-binding subunit ClpX (416 aa).

In terms of domain architecture, ClpX-type ZB spans 1–54; the sequence is MFKFGDEKGQLKCSFCGKSQEQVRKLVAGPGVYICDECIELCNEIIEEELNDDV. Zn(2+)-binding residues include C13, C16, C35, and C38. 117–124 contacts ATP; the sequence is PTGCGKTL.

It belongs to the ClpX chaperone family. As to quaternary structure, component of the ClpX-ClpP complex. Forms a hexameric ring that, in the presence of ATP, binds to fourteen ClpP subunits assembled into a disk-like structure with a central cavity, resembling the structure of eukaryotic proteasomes.

Functionally, ATP-dependent specificity component of the Clp protease. It directs the protease to specific substrates. Can perform chaperone functions in the absence of ClpP. The chain is ATP-dependent Clp protease ATP-binding subunit ClpX from Halothermothrix orenii (strain H 168 / OCM 544 / DSM 9562).